Reading from the N-terminus, the 635-residue chain is Threonine--tRNA ligase (635 aa).

In terms of domain architecture, TGS spans 1 to 61 (MINISFPDGS…ENDCKLRILT (61 aa)). The catalytic stretch occupies residues 242-533 (DHRKLGKELD…LIEEYAGCFP (292 aa)). Zn(2+) is bound by residues C333, H384, and H510.

It belongs to the class-II aminoacyl-tRNA synthetase family. Homodimer. Requires Zn(2+) as cofactor.

Its subcellular location is the cytoplasm. The enzyme catalyses tRNA(Thr) + L-threonine + ATP = L-threonyl-tRNA(Thr) + AMP + diphosphate + H(+). In terms of biological role, catalyzes the attachment of threonine to tRNA(Thr) in a two-step reaction: L-threonine is first activated by ATP to form Thr-AMP and then transferred to the acceptor end of tRNA(Thr). Also edits incorrectly charged L-seryl-tRNA(Thr). This Rickettsia akari (strain Hartford) protein is Threonine--tRNA ligase.